Consider the following 108-residue polypeptide: Guanine nucleotide-binding protein subunit gamma (108 aa).

Cys-104 carries the S-palmitoyl cysteine lipid modification. The residue at position 105 (Cys-105) is a Cysteine methyl ester. A lipid anchor (S-farnesyl cysteine) is attached at Cys-105. The propeptide at 106 to 108 (VIS) is removed in mature form.

Belongs to the G protein gamma family. G proteins are composed of 3 units, alpha, beta and gamma.

The protein resides in the membrane. This Yarrowia lipolytica (strain CLIB 122 / E 150) (Yeast) protein is Guanine nucleotide-binding protein subunit gamma.